A 420-amino-acid polypeptide reads, in one-letter code: 4-hydroxy-3-methylbut-2-en-1-yl diphosphate synthase (flavodoxin) (420 aa).

Positions 307, 310, 353, and 360 each coordinate [4Fe-4S] cluster.

The protein belongs to the IspG family. [4Fe-4S] cluster serves as cofactor.

It carries out the reaction (2E)-4-hydroxy-3-methylbut-2-enyl diphosphate + oxidized [flavodoxin] + H2O + 2 H(+) = 2-C-methyl-D-erythritol 2,4-cyclic diphosphate + reduced [flavodoxin]. It participates in isoprenoid biosynthesis; isopentenyl diphosphate biosynthesis via DXP pathway; isopentenyl diphosphate from 1-deoxy-D-xylulose 5-phosphate: step 5/6. Converts 2C-methyl-D-erythritol 2,4-cyclodiphosphate (ME-2,4cPP) into 1-hydroxy-2-methyl-2-(E)-butenyl 4-diphosphate. The chain is 4-hydroxy-3-methylbut-2-en-1-yl diphosphate synthase (flavodoxin) from Brucella suis biovar 1 (strain 1330).